Consider the following 501-residue polypeptide: Flagellin (501 aa).

The protein belongs to the bacterial flagellin family.

The protein resides in the secreted. It localises to the bacterial flagellum. Functionally, flagellin is the subunit protein which polymerizes to form the filaments of bacterial flagella. The sequence is that of Flagellin (flaA) from Aquifex pyrophilus.